A 524-amino-acid chain; its full sequence is Cytochrome c nitrite reductase subunit NrfA (524 aa).

The N-terminal stretch at 1–24 is a signal peptide; the sequence is MNNQKTFKGLRLAALGLVAVAAFT. Residues 29–39 are interaction with NrfH; sequence DVSTELKTPVY. 3 residues coordinate Ca(2+): Gly-78, Glu-117, and Ala-118. 7 residues coordinate heme: His-121, Cys-147, Cys-150, Lys-151, Cys-187, Cys-190, and His-191. The tract at residues 221-222 is interaction with NrfH; the sequence is RN. 3 residues coordinate heme: Cys-229, Cys-232, and His-233. Ca(2+) contacts are provided by Glu-235, Tyr-236, Lys-295, and Gln-297. Positions 309, 316, 319, 320, 335, 349, 352, 353, and 434 each coordinate heme. Residues 318–331 are interaction with NrfH; the sequence is DCHMSYTRSDDKKK. The tract at residues 351–355 is interaction with NrfH; it reads QCHSD.

It belongs to the cytochrome c-552 family. In terms of assembly, component of the NrfHA cytochrome c nitrite reductase complex composed of 4 NrfA catalytic subunits and 2 NrfH quinone-binding subunits. NrfA homodimer interacts with NrfH. Ca(2+) is required as a cofactor. It depends on heme as a cofactor.

It localises to the cell inner membrane. It carries out the reaction 6 Fe(III)-[cytochrome c] + NH4(+) + 2 H2O = 6 Fe(II)-[cytochrome c] + nitrite + 8 H(+). Catalytic subunit of the cytochrome c nitrite reductase holocomplex NrfHA. Has both nitrite and sulfite reductase activities. Catalyzes the reduction of nitrite to ammonia, consuming six electrons acquired by the electron donor subunit NrfH from the menaquinone pool, in an anaerobic respiratory process of nitrite. The other biological function of the NrfHA holocomplex is to detoxify nitrite. This function is essential for the survival of this organism as it enables it to overcome inhibition by nitrite, which is produced by other organisms living in the same environment. The sequence is that of Cytochrome c nitrite reductase subunit NrfA from Nitratidesulfovibrio vulgaris (strain ATCC 29579 / DSM 644 / CCUG 34227 / NCIMB 8303 / VKM B-1760 / Hildenborough) (Desulfovibrio vulgaris).